Here is a 275-residue protein sequence, read N- to C-terminus: Formamidopyrimidine-DNA glycosylase (275 aa).

Catalysis depends on Pro-2, which acts as the Schiff-base intermediate with DNA. Residue Glu-3 is the Proton donor of the active site. Catalysis depends on Lys-59, which acts as the Proton donor; for beta-elimination activity. Residues His-92, Arg-111, and Arg-155 each coordinate DNA. Residues 240–274 (NVYGRAGKACPKCGTTIEKQVLGQRSSYYCPQCQR) form an FPG-type zinc finger. Arg-264 (proton donor; for delta-elimination activity) is an active-site residue.

Belongs to the FPG family. As to quaternary structure, monomer. It depends on Zn(2+) as a cofactor.

The catalysed reaction is Hydrolysis of DNA containing ring-opened 7-methylguanine residues, releasing 2,6-diamino-4-hydroxy-5-(N-methyl)formamidopyrimidine.. The enzyme catalyses 2'-deoxyribonucleotide-(2'-deoxyribose 5'-phosphate)-2'-deoxyribonucleotide-DNA = a 3'-end 2'-deoxyribonucleotide-(2,3-dehydro-2,3-deoxyribose 5'-phosphate)-DNA + a 5'-end 5'-phospho-2'-deoxyribonucleoside-DNA + H(+). Involved in base excision repair of DNA damaged by oxidation or by mutagenic agents. Acts as a DNA glycosylase that recognizes and removes damaged bases. Has a preference for oxidized purines, such as 7,8-dihydro-8-oxoguanine (8-oxoG). Has AP (apurinic/apyrimidinic) lyase activity and introduces nicks in the DNA strand. Cleaves the DNA backbone by beta-delta elimination to generate a single-strand break at the site of the removed base with both 3'- and 5'-phosphates. This Magnetococcus marinus (strain ATCC BAA-1437 / JCM 17883 / MC-1) protein is Formamidopyrimidine-DNA glycosylase.